We begin with the raw amino-acid sequence, 591 residues long: Eukaryotic translation initiation factor 3 subunit D (591 aa).

Positions 100–159 (SGGNPDEDAAFRLVDGKPPPRPKFGPKWRFNPHHNRNQLPQRRDEEVEAKKRDAEKERAR) are disordered. The span at 123 to 135 (FGPKWRFNPHHNR) shows a compositional bias: basic residues. Positions 140-159 (QRRDEEVEAKKRDAEKERAR) are enriched in basic and acidic residues. The segment at 309–323 (QLDLLSVHETSQEPL) is RNA gate. Over residues 549 to 560 (DYVEEPLPEDEQ) the composition is skewed to acidic residues. The tract at residues 549 to 591 (DYVEEPLPEDEQVQPTEENTEGAEASVAATKETEEKKADDAQA) is disordered. Positions 579-591 (KETEEKKADDAQA) are enriched in basic and acidic residues.

It belongs to the eIF-3 subunit D family. In terms of assembly, component of the eukaryotic translation initiation factor 3 (eIF-3) complex, which is composed of at least 13 different subunits.

The protein localises to the cytoplasm. In terms of biological role, mRNA cap-binding component of the eukaryotic translation initiation factor 3 (eIF-3) complex, which is involved in protein synthesis of a specialized repertoire of mRNAs and, together with other initiation factors, stimulates binding of mRNA and methionyl-tRNAi to the 40S ribosome. The eIF-3 complex specifically targets and initiates translation of a subset of mRNAs involved in cell proliferation. In the eIF-3 complex, eif3d specifically recognizes and binds the 7-methylguanosine cap of a subset of mRNAs. This chain is Eukaryotic translation initiation factor 3 subunit D (TIF3D1), found in Arabidopsis thaliana (Mouse-ear cress).